Reading from the N-terminus, the 63-residue chain is Large ribosomal subunit protein bL28 (63 aa).

The protein belongs to the bacterial ribosomal protein bL28 family.

This chain is Large ribosomal subunit protein bL28, found in Clostridium botulinum (strain Alaska E43 / Type E3).